Consider the following 500-residue polypeptide: 4-aminobutyrate aminotransferase, mitochondrial (500 aa).

A mitochondrion-targeting transit peptide spans 1–28; it reads MASMLVAQRLACSFQHSYRLLVPGSRHI. Cys-163 contacts [2Fe-2S] cluster. Position 164–165 (164–165) interacts with pyridoxal 5'-phosphate; that stretch reads GS. Cys-166 contributes to the [2Fe-2S] cluster binding site. Residue Arg-220 coordinates substrate. At Lys-231 the chain carries N6-succinyllysine. N6-acetyllysine; alternate is present on Lys-252. At Lys-252 the chain carries N6-succinyllysine; alternate. Lys-279 and Lys-318 each carry N6-acetyllysine. An N6-(pyridoxal phosphate)lysine modification is found at Lys-357. Pyridoxal 5'-phosphate is bound at residue Thr-381. Lys-413 is subject to N6-acetyllysine; alternate. N6-succinyllysine; alternate is present on Lys-413. Residues Lys-452 and Lys-470 each carry the N6-acetyllysine modification.

It belongs to the class-III pyridoxal-phosphate-dependent aminotransferase family. As to quaternary structure, homodimer; disulfide-linked. Pyridoxal 5'-phosphate is required as a cofactor. Requires [2Fe-2S] cluster as cofactor.

It localises to the mitochondrion matrix. It carries out the reaction 4-aminobutanoate + 2-oxoglutarate = succinate semialdehyde + L-glutamate. The catalysed reaction is (S)-3-amino-2-methylpropanoate + 2-oxoglutarate = 2-methyl-3-oxopropanoate + L-glutamate. In terms of biological role, catalyzes the conversion of gamma-aminobutyrate and L-beta-aminoisobutyrate to succinate semialdehyde and methylmalonate semialdehyde, respectively. Can also convert delta-aminovalerate and beta-alanine. The protein is 4-aminobutyrate aminotransferase, mitochondrial (ABAT) of Bos taurus (Bovine).